Here is a 544-residue protein sequence, read N- to C-terminus: Fructose dehydrogenase large subunit (544 aa).

14–30 contacts FAD; it reads GAGICGSLLAHKLVRNG. H478 acts as the Proton acceptor in catalysis.

The protein belongs to the GMC oxidoreductase family. As to quaternary structure, heterotrimer composed of FdhL, FdhS and FdhC. FAD is required as a cofactor.

The protein localises to the cell membrane. The enzyme catalyses keto-D-fructose + a ubiquinone = 5-dehydro-D-fructose + a ubiquinol. Functionally, catalytic subunit of fructose dehydrogenase, an enzyme that catalyzes the oxidation of D-fructose to produce 5-keto-D-fructose. This Gluconobacter japonicus protein is Fructose dehydrogenase large subunit (fdhL).